Consider the following 346-residue polypeptide: Iron uptake protein A2 (346 aa).

The tat-type signal signal peptide spans 1–31; the sequence is MTTKISRRTFFVGGTALTALVVANLPRRASA. Positions 43, 44, 169, 225, and 226 each coordinate Fe cation.

Belongs to the bacterial solute-binding protein 1 family. Predicted to be exported by the Tat system. The position of the signal peptide cleavage has not been experimentally proven.

The protein localises to the cellular thylakoid membrane. Its subcellular location is the periplasm. Functionally, probably part of a periplasmic ABC transporter complex futA1A2BC (TC 3.A.1.10.2) involved in Fe(3+) ion import (ferric iron). This protein and futA1 (slr1295) are subunit proteins that have redundant or overlapping substrate-binding functions. The differing subcellular locations of futA1 (predominantly thylakoid lumen) and futA2 (predominantly periplasmic) suggest they may fulfill different roles. Plays an important role in protecting the acceptor side of photosystem II (PSII) against oxidative damage, especially under iron-limiting growth conditions. In terms of biological role, plays an undefined role in copper supply to thylakoid proteins. The sequence is that of Iron uptake protein A2 (futA2) from Synechocystis sp. (strain ATCC 27184 / PCC 6803 / Kazusa).